Reading from the N-terminus, the 414-residue chain is L-lysine 2,3-aminomutase (414 aa).

Residues 89–101 are compositionally biased toward basic and acidic residues; sequence AASDQEDPLHEDG. Positions 89–108 are disordered; it reads AASDQEDPLHEDGDSPVPGL. Residues 110-321 enclose the Radical SAM core domain; that stretch reads HRYPDRVLLL…EGLRGHTSGY (212 aa). Positions 124, 128, and 131 each coordinate [4Fe-4S] cluster. Residue C267 coordinates Zn(2+). K336 carries the post-translational modification N6-(pyridoxal phosphate)lysine. Zn(2+)-binding residues include C374, C376, and C379.

It belongs to the radical SAM superfamily. KamA family. In terms of assembly, homotetramer. [4Fe-4S] cluster serves as cofactor. It depends on pyridoxal 5'-phosphate as a cofactor. Requires Zn(2+) as cofactor.

It carries out the reaction L-lysine = (3S)-3,6-diaminohexanoate. Its pathway is amino-acid degradation; L-lysine degradation via acetate pathway. In terms of biological role, catalyzes the interconversion of L-alpha-lysine and L-beta-lysine. The chain is L-lysine 2,3-aminomutase (kamA) from Acetoanaerobium sticklandii (strain ATCC 12662 / DSM 519 / JCM 1433 / CCUG 9281 / NCIMB 10654 / HF) (Clostridium sticklandii).